Consider the following 157-residue polypeptide: Protein Smg (157 aa).

The protein belongs to the Smg family.

The polypeptide is Protein Smg (Pectobacterium carotovorum subsp. carotovorum (strain PC1)).